A 298-amino-acid polypeptide reads, in one-letter code: Small ribosomal subunit biogenesis GTPase RsgA (298 aa).

One can recognise a CP-type G domain in the interval 67–228 (TNELIRPPIC…VADTPGFSSL (162 aa)). Position 116–119 (116–119 (TKMD)) interacts with GTP. The residue at position 166 (Thr166) is a Phosphothreonine. GTP is bound at residue 171-179 (GQSGVGKSS). Residues Cys252, Cys257, His259, and Cys265 each contribute to the Zn(2+) site.

Belongs to the TRAFAC class YlqF/YawG GTPase family. RsgA subfamily. Monomer, but able to form dimers. Associates with 30S ribosomal subunit; a phospho-mimetic mutation increases association. Probably binds 16S rRNA. The cofactor is Zn(2+). In terms of processing, in vitro phosphorylated mostly on Thr (with lower signal on Ser) by PrkC in the presence of poly-L-Lys or myelin basic protein, dephosphorylated by PrpC. Most in vitro phosphorylation occurs on Thr-166, in vivo phosphorylation has not been detected, but it might vary during the cell cycle.

The protein resides in the cytoplasm. One of several proteins that assist in the late maturation steps of the functional core of the 30S ribosomal subunit. Helps release RbfA from mature subunits. May play a role in the assembly of ribosomal proteins into the subunit. Circularly permuted GTPase with a low level of activity and slow catalytic turnover, does not act on ATP. GTPase activity is stimulated by the presence of 30S or 70S ribosomes, phosphorylation increases stimulation. Depletion results in increased sensitivity to protein synthesis inhibitors that block the peptide channel or peptidyl transferase center on the ribosome, suggesting this protein functions in conjunction with the ribosome in vivo. Decreasing levels of protein lead to an increase in free 30S and 50S ribosomal subunits and a decrease in assembled 70S ribosomes. Suggested to serve as a specific transcription factor for proteins involved in late stages of peptidoglycan synthesis. The polypeptide is Small ribosomal subunit biogenesis GTPase RsgA (Bacillus subtilis (strain 168)).